Here is a 103-residue protein sequence, read N- to C-terminus: Small ribosomal subunit protein uS10 (103 aa).

Belongs to the universal ribosomal protein uS10 family. As to quaternary structure, part of the 30S ribosomal subunit.

Involved in the binding of tRNA to the ribosomes. This chain is Small ribosomal subunit protein uS10, found in Stutzerimonas stutzeri (strain A1501) (Pseudomonas stutzeri).